We begin with the raw amino-acid sequence, 802 residues long: Leucine--tRNA ligase (802 aa).

The 'HIGH' region motif lies at P40–H51. Positions K576–S580 match the 'KMSKS' region motif. K579 lines the ATP pocket.

This sequence belongs to the class-I aminoacyl-tRNA synthetase family.

It localises to the cytoplasm. The catalysed reaction is tRNA(Leu) + L-leucine + ATP = L-leucyl-tRNA(Leu) + AMP + diphosphate. The sequence is that of Leucine--tRNA ligase from Bacillus cereus (strain G9842).